A 129-amino-acid chain; its full sequence is Sm-like protein LSM4 (129 aa).

The region spanning 2–75 is the Sm domain; the sequence is LPLSLLKTAQ…IKYLRVPDEV (74 aa). Basic and acidic residues predominate over residues 79 to 90; that stretch reads VQEEKTRTDRKP. Residues 79–129 form a disordered region; that stretch reads VQEEKTRTDRKPPGVGRGRGRGVDDGGARGRGRGTSMGKMGGNRGAGRGRG. Positions 111–129 are enriched in gly residues; the sequence is RGTSMGKMGGNRGAGRGRG.

This sequence belongs to the snRNP Sm proteins family. As to quaternary structure, component of the heptameric LSM1-LSM7 complex that forms a seven-membered ring structure with a donut shape. The LSM subunits are arranged in the order LSM1, LSM2, LSM3, LSM6, LSM5, LSM7 and LSM4. LSM4 subunit interacts only with its two neighboring subunits, LSM1A or LSM1B and LSM7. Component of the heptameric LSM2-LSM8 complex that forms a seven-membered ring structure with a donut shape. The LSM subunits are arranged in the order LSM8, LSM2, LSM3, LSM6, LSM5, LSM7 and LSM4. LSM4 subunit interacts only with its two neighboring subunits, LSM8 and LSM7. Methylated by PMRT15/SKB1 in response to salt stress or abscisic acid (ABA) treatment. In terms of tissue distribution, expressed in roots, leaves, stems, flowers and siliques.

It localises to the cytoplasm. It is found in the nucleus. Its function is as follows. Component of LSM protein complexes, which are involved in RNA processing. Component of the cytoplasmic LSM1-LSM7 complex which is involved in mRNA degradation by promoting decapping and leading to accurate 5'-3' mRNA decay. The cytoplasmic LSM1-LSM7 complex regulates developmental gene expression by the decapping of specific development-related transcripts. Component of the nuclear LSM2-LSM8 complex which is involved splicing nuclear mRNAs. LSM2-LSM8 binds directly to the U6 small nuclear RNAs (snRNAs) and is essential for accurate splicing of selected development-related mRNAs through the stabilization of the spliceosomal U6 snRNA. Plays a critical role in the regulation of development-related gene expression. The polypeptide is Sm-like protein LSM4 (Arabidopsis thaliana (Mouse-ear cress)).